The primary structure comprises 452 residues: Pre-mRNA-splicing factor prp46 (452 aa).

Over residues 61-70 the composition is skewed to low complexity; it reads AAKQAQAAAA. The disordered stretch occupies residues 61-129; sequence AAKQAQAAAA…SATRQQPPEW (69 aa). Over residues 114–125 the composition is skewed to polar residues; the sequence is SLIQRPSATRQQ. 7 WD repeats span residues 141 to 180, 183 to 222, 225 to 264, 267 to 308, 310 to 349, 350 to 388, and 399 to 438; these read GHLGWVRSLAVEPNNEWFASGAGDRTIKIWNLATGALRLT, GHISTVRGLAVSPRHPYLFSCGEDKMVKCWDLETNKVIRH, GHLSGVYTLALHPRLDLLVTGGRDGVARVWDMRTRSNIHV, GHTG…GVLT, HKKGIRSLATHPREFTFASASTGSIKQWKCPGGEFMQNFE, GHNAIINTLSVNEDNVLFSGGDNGSMSFWDWKTGYRYQT, and EAEAGIMTSTFDRTGLRLITGEADKTIKVWKQDDQATPET. Residues 432 to 452 are disordered; the sequence is DQATPETHPVTWAPTLGRQRY.

The protein belongs to the WD repeat PRL1/PRL2 family. As to quaternary structure, associated with the spliceosome.

Its subcellular location is the cytoplasm. It is found in the nucleus. Its function is as follows. Involved in pre-mRNA splicing and required for cell cycle progression at G2/M. The protein is Pre-mRNA-splicing factor prp46 (prp46) of Emericella nidulans (strain FGSC A4 / ATCC 38163 / CBS 112.46 / NRRL 194 / M139) (Aspergillus nidulans).